The primary structure comprises 23 residues: U22-ctenitoxin-Co1a (23 aa).

Expressed by the venom gland.

The protein resides in the secreted. This is U22-ctenitoxin-Co1a from Ctenus ornatus (Brazilian spider).